Reading from the N-terminus, the 1226-residue chain is Methionine synthase (1226 aa).

Residues 6–326 (RAQIEAQLKQ…EHIRHMAMAV (321 aa)) form the Hcy-binding domain. 3 residues coordinate Zn(2+): C248, C311, and C312. The Pterin-binding domain maps to 357 to 618 (FVNVGERTNV…VPEKLREAVE (262 aa)). Residues 651-745 (SALEWRTWSV…FINASKQVGS (95 aa)) form the B12-binding N-terminal domain. Methylcob(III)alamin is bound by residues E695, 757–761 (GDVHD), H760, S805, T809, and A861. The B12-binding domain occupies 747–882 (NGKILLATVK…SDELRPAFVE (136 aa)). In terms of domain architecture, AdoMet activation spans 898-1226 (KKPRTKPVTL…EKWLGPNING (329 aa)). S-adenosyl-L-methionine-binding positions include D948, R1136, and 1191–1192 (YF).

This sequence belongs to the vitamin-B12 dependent methionine synthase family. It depends on methylcob(III)alamin as a cofactor. Requires Zn(2+) as cofactor.

It catalyses the reaction (6S)-5-methyl-5,6,7,8-tetrahydrofolate + L-homocysteine = (6S)-5,6,7,8-tetrahydrofolate + L-methionine. Its pathway is amino-acid biosynthesis; L-methionine biosynthesis via de novo pathway; L-methionine from L-homocysteine (MetH route): step 1/1. In terms of biological role, catalyzes the transfer of a methyl group from methyl-cobalamin to homocysteine, yielding enzyme-bound cob(I)alamin and methionine. Subsequently, remethylates the cofactor using methyltetrahydrofolate. The protein is Methionine synthase (metH) of Vibrio vulnificus (strain YJ016).